The following is a 651-amino-acid chain: Peptide-N(4)-(N-acetyl-beta-glucosaminyl)asparagine amidase (651 aa).

A2 bears the N-acetylalanine mark. One can recognise a PUB domain in the interval 30 to 91; the sequence is EASKLLLTYA…EGETHLIFPK (62 aa). The disordered stretch occupies residues 116-153; the sequence is SSQKVEFSQHPAAVRLPAEQPEDPTGLMQHSGNQPGQP. Residues 143–152 are compositionally biased toward polar residues; it reads MQHSGNQPGQ. Residues C247, C250, C280, and C283 each coordinate Zn(2+). The Nucleophile role is filled by C306. Active-site residues include H333 and D350. A PAW domain is found at 451 to 651; that stretch reads ELGGRVSGSL…LEIIITFSDL (201 aa).

This sequence belongs to the transglutaminase-like superfamily. PNGase family. In terms of assembly, component of a complex required to couple retrotranslocation, ubiquitination and deglycosylation composed of NGLY1, SAKS1, AMFR, VCP and RAD23B. Interacts with the proteasome components RAD23B and PSMC1. Interacts with directly with VCP. Interacts with DERL1, bringing it close to the endoplasmic reticulum membrane. Interacts with SAKS1. It depends on Zn(2+) as a cofactor.

It is found in the cytoplasm. The enzyme catalyses Hydrolysis of an N(4)-(acetyl-beta-D-glucosaminyl)asparagine residue in which the glucosamine residue may be further glycosylated, to yield a (substituted) N-acetyl-beta-D-glucosaminylamine and a peptide containing an aspartate residue.. Inhibited by Z-VAD-fmk, a well-known caspase inhibitor, which inhibits enzyme activity through covalent binding of the carbohydrate to the single Cys-306 residue. Functionally, specifically deglycosylates the denatured form of N-linked glycoproteins in the cytoplasm and assists their proteasome-mediated degradation. Cleaves the beta-aspartyl-glucosamine (GlcNAc) of the glycan and the amide side chain of Asn, converting Asn to Asp. Prefers proteins containing high-mannose over those bearing complex type oligosaccharides. Can recognize misfolded proteins in the endoplasmic reticulum that are exported to the cytosol to be destroyed and deglycosylate them, while it has no activity toward native proteins. Deglycosylation is a prerequisite for subsequent proteasome-mediated degradation of some, but not all, misfolded glycoproteins. In Rattus norvegicus (Rat), this protein is Peptide-N(4)-(N-acetyl-beta-glucosaminyl)asparagine amidase (Ngly1).